Consider the following 282-residue polypeptide: Bis(5'-nucleosyl)-tetraphosphatase, symmetrical (282 aa).

This sequence belongs to the Ap4A hydrolase family.

The catalysed reaction is P(1),P(4)-bis(5'-adenosyl) tetraphosphate + H2O = 2 ADP + 2 H(+). Functionally, hydrolyzes diadenosine 5',5'''-P1,P4-tetraphosphate to yield ADP. This is Bis(5'-nucleosyl)-tetraphosphatase, symmetrical from Shigella dysenteriae serotype 1 (strain Sd197).